The chain runs to 224 residues: Cytidylate kinase (224 aa).

G11 to T19 serves as a coordination point for ATP.

The protein belongs to the cytidylate kinase family. Type 1 subfamily.

The protein localises to the cytoplasm. It catalyses the reaction CMP + ATP = CDP + ADP. The enzyme catalyses dCMP + ATP = dCDP + ADP. The protein is Cytidylate kinase of Bacillus velezensis (strain DSM 23117 / BGSC 10A6 / LMG 26770 / FZB42) (Bacillus amyloliquefaciens subsp. plantarum).